Reading from the N-terminus, the 81-residue chain is Small ribosomal subunit protein bS16 (81 aa).

It belongs to the bacterial ribosomal protein bS16 family.

The protein is Small ribosomal subunit protein bS16 of Caldicellulosiruptor bescii (strain ATCC BAA-1888 / DSM 6725 / KCTC 15123 / Z-1320) (Anaerocellum thermophilum).